The following is a 1000-amino-acid chain: Sop-2-related protein 1 (1000 aa).

3 disordered regions span residues 355-374 (KIMK…QYQQ), 379-422 (HQQH…GPSE), and 466-509 (APSE…VARG). The span at 390 to 404 (SSSSVPSTSSPSCSS) shows a compositional bias: low complexity. Residues 406–415 (ANRKEMETVR) show a composition bias toward basic and acidic residues. Residues 489–502 (GPSQQQQIPGTSQQ) are compositionally biased toward low complexity. The interval 633-720 (REQILPQQYM…LNTSSVQPSE (88 aa)) is RNA-binding. The segment at 948-1000 (HRMHSQRPPSMGNSSTSSEASSTSPTNAATATSSPASNRPTTSTAQPPTLNPT) is disordered. Residues 960-992 (NSSTSSEASSTSPTNAATATSSPASNRPTTSTA) show a composition bias toward low complexity.

As to quaternary structure, binds through its N-terminal region to the N-terminal region of sop-2.

The protein localises to the nucleus. Acts synergistically with sop-2 to maintain the transcriptionally repressive state of homeotic genes throughout development. Not required to initiate repression, but to maintain it during later stages of development. Also required to repress expression of other genes. Binds RNA in a sequence-independent manner. In Caenorhabditis elegans, this protein is Sop-2-related protein 1 (sor-1).